Here is a 195-residue protein sequence, read N- to C-terminus: Imidazoleglycerol-phosphate dehydratase (195 aa).

This sequence belongs to the imidazoleglycerol-phosphate dehydratase family.

The protein localises to the cytoplasm. The enzyme catalyses D-erythro-1-(imidazol-4-yl)glycerol 3-phosphate = 3-(imidazol-4-yl)-2-oxopropyl phosphate + H2O. It participates in amino-acid biosynthesis; L-histidine biosynthesis; L-histidine from 5-phospho-alpha-D-ribose 1-diphosphate: step 6/9. In Bordetella petrii (strain ATCC BAA-461 / DSM 12804 / CCUG 43448), this protein is Imidazoleglycerol-phosphate dehydratase.